The sequence spans 472 residues: Inactive CLIP domain-containing serine protease A3 (472 aa).

2 helical membrane passes run 51 to 71 (ISFV…WSSM) and 78 to 98 (LPAL…HTYA). N-linked (GlcNAc...) asparagine glycosylation is found at N122, N133, N149, and N152. Residues 223–470 (VAAAKAPAAG…YVPWITSTVS (248 aa)) enclose the Peptidase S1 domain. Intrachain disulfides connect C354–C428, C386–C408, and C418–C446.

This sequence belongs to the peptidase S1 family. CLIP subfamily. In terms of tissue distribution, expressed at highest levels in head and salivary gland. Expressed in ovary and carcass. Minimal expression in midgut.

It is found in the membrane. Its function is as follows. Probable inactive serine protease. Induces migration of cultured mouse embryonic fibroblasts. Functionally, (Microbial infection) Promotes dengue virus type 2 replication in the host. The polypeptide is Inactive CLIP domain-containing serine protease A3 (Aedes aegypti (Yellowfever mosquito)).